We begin with the raw amino-acid sequence, 256 residues long: tRNA pseudouridine synthase A (256 aa).

Asp-43 (nucleophile) is an active-site residue. Tyr-94 contacts substrate.

The protein belongs to the tRNA pseudouridine synthase TruA family.

The enzyme catalyses uridine(38/39/40) in tRNA = pseudouridine(38/39/40) in tRNA. Functionally, formation of pseudouridine at positions 38, 39 and 40 in the anticodon stem and loop of transfer RNAs. The sequence is that of tRNA pseudouridine synthase A from Pyrobaculum aerophilum (strain ATCC 51768 / DSM 7523 / JCM 9630 / CIP 104966 / NBRC 100827 / IM2).